The sequence spans 186 residues: Ribosome-recycling factor (186 aa).

The protein belongs to the RRF family.

The protein resides in the cytoplasm. Functionally, responsible for the release of ribosomes from messenger RNA at the termination of protein biosynthesis. May increase the efficiency of translation by recycling ribosomes from one round of translation to another. The polypeptide is Ribosome-recycling factor (Bartonella tribocorum (strain CIP 105476 / IBS 506)).